We begin with the raw amino-acid sequence, 460 residues long: Probable glucan endo-1,3-beta-glucosidase eglC (460 aa).

The first 18 residues, 1 to 18, serve as a signal peptide directing secretion; it reads MQLAQLAAFAMTLATSEA. The Proton donor role is filled by glutamate 128. Asparagine 183 carries an N-linked (GlcNAc...) asparagine glycan. Glutamate 239 acts as the Nucleophile in catalysis. N-linked (GlcNAc...) asparagine glycans are attached at residues asparagine 312, asparagine 367, and asparagine 373. Residues 379–437 form a disordered region; the sequence is RPSGSASARPSAGAISSGSGSSSSGSGSSGSTGTSATSGQSSSSGSSAAAGSSSPAAFS. Over residues 380-437 the composition is skewed to low complexity; that stretch reads PSGSASARPSAGAISSGSGSSSSGSGSSGSTGTSATSGQSSSSGSSAAAGSSSPAAFS. Serine 430 is lipidated: GPI-anchor amidated serine. Residues 431–460 constitute a propeptide, removed in mature form; sequence SSPAAFSGASTLSGSLFGAVVAVFMTLAAL.

Belongs to the glycosyl hydrolase 17 family. In terms of processing, the GPI-anchor is attached to the protein in the endoplasmic reticulum and serves to target the protein to the cell surface. There, the glucosamine-inositol phospholipid moiety is cleaved off and the GPI-modified mannoprotein is covalently attached via its lipidless GPI glycan remnant to the 1,6-beta-glucan of the outer cell wall layer.

It localises to the cell membrane. It is found in the secreted. Its subcellular location is the cell wall. It carries out the reaction Hydrolysis of (1-&gt;3)-beta-D-glucosidic linkages in (1-&gt;3)-beta-D-glucans.. In terms of biological role, glucanases play a role in cell expansion during growth, in cell-cell fusion during mating, and in spore release during sporulation. This enzyme may be involved in beta-glucan degradation and also function biosynthetically as a transglycosylase. The protein is Probable glucan endo-1,3-beta-glucosidase eglC (eglC) of Aspergillus niger (strain ATCC MYA-4892 / CBS 513.88 / FGSC A1513).